The chain runs to 426 residues: UPF0229 protein YeaH (426 aa).

A compositionally biased stretch (basic and acidic residues) spans 78–92; the sequence is GNDHFIQNDRIERPQ. The tract at residues 78 to 108 is disordered; it reads GNDHFIQNDRIERPQDGGGSGSGNGQASQDG.

This sequence belongs to the UPF0229 family.

This Salmonella arizonae (strain ATCC BAA-731 / CDC346-86 / RSK2980) protein is UPF0229 protein YeaH.